We begin with the raw amino-acid sequence, 212 residues long: 3-isopropylmalate dehydratase small subunit (212 aa).

This sequence belongs to the LeuD family. LeuD type 1 subfamily. Heterodimer of LeuC and LeuD.

The enzyme catalyses (2R,3S)-3-isopropylmalate = (2S)-2-isopropylmalate. It participates in amino-acid biosynthesis; L-leucine biosynthesis; L-leucine from 3-methyl-2-oxobutanoate: step 2/4. Its function is as follows. Catalyzes the isomerization between 2-isopropylmalate and 3-isopropylmalate, via the formation of 2-isopropylmaleate. The sequence is that of 3-isopropylmalate dehydratase small subunit from Pseudomonas aeruginosa (strain UCBPP-PA14).